The following is a 510-amino-acid chain: ATP synthase subunit alpha (510 aa).

Position 169 to 176 (169 to 176 (GDRQTGKT)) interacts with ATP.

The protein belongs to the ATPase alpha/beta chains family. As to quaternary structure, F-type ATPases have 2 components, CF(1) - the catalytic core - and CF(0) - the membrane proton channel. CF(1) has five subunits: alpha(3), beta(3), gamma(1), delta(1), epsilon(1). CF(0) has four main subunits: a(1), b(1), b'(1) and c(9-12).

It is found in the cell inner membrane. The enzyme catalyses ATP + H2O + 4 H(+)(in) = ADP + phosphate + 5 H(+)(out). Functionally, produces ATP from ADP in the presence of a proton gradient across the membrane. The alpha chain is a regulatory subunit. This Rhodopseudomonas palustris (strain HaA2) protein is ATP synthase subunit alpha.